The primary structure comprises 210 residues: Replication protein RepB (210 aa).

This sequence belongs to the Gram-positive plasmids replication protein type 2 family.

Its function is as follows. Is essential for plasmid replication. Nicks the positive strand at the plus origin of replication. The polypeptide is Replication protein RepB (repB) (Streptococcus agalactiae).